A 600-amino-acid polypeptide reads, in one-letter code: Brain-enriched guanylate kinase-associated protein (600 aa).

M1 carries the N-acetylmethionine modification. Y137 bears the Phosphotyrosine mark. The interval 192-222 is disordered; the sequence is PGSLSSRMSDASARDLGYRDGVEKSGPRPPY. Phosphoserine is present on S200. A compositionally biased stretch (basic and acidic residues) spans 203-217; the sequence is SARDLGYRDGVEKSG. Residues S229 and S246 each carry the phosphoserine modification. Residue T249 is modified to Phosphothreonine. S265 is modified (phosphoserine). The segment at 298–317 is disordered; it reads SSYSSFSATSEEKEHAQAGT. S372 carries the post-translational modification Phosphoserine. R380 is subject to Asymmetric dimethylarginine. Phosphoserine is present on residues S463, S473, S483, S485, S508, S510, and S514. Residues 537–590 are disordered; sequence GAGSSPEPEHGSRESLEPSSMEASPEMHPPTRLSPQQAFPRTGGSGLSRKDSLT. Over residues 543–552 the composition is skewed to basic and acidic residues; it reads EPEHGSRESL. A phosphoserine mark is found at S560 and S570.

Interacts with DLG4 and DLGAP1 and forms a ternary complex.

The protein localises to the cytoplasm. Its subcellular location is the membrane. Its function is as follows. May sustain the structure of the postsynaptic density (PSD). The sequence is that of Brain-enriched guanylate kinase-associated protein (Begain) from Mus musculus (Mouse).